A 215-amino-acid chain; its full sequence is Nascent polypeptide-associated complex subunit alpha (215 aa).

Residues 1–81 form a disordered region; it reads MPGEATETVP…SEKKARKAMS (81 aa). Residues 9–28 are compositionally biased toward polar residues; the sequence is VPATEQELPQPQAETGSGTE. Residues 29-42 are compositionally biased toward acidic residues; it reads SDSDESVPELEEQD. Serine 43 bears the Phosphoserine; by ILK1 mark. A compositionally biased stretch (low complexity) spans 44–57; sequence TQTATQQAQLAAAA. The segment at 69–80 is required for DNA-binding; sequence QSRSEKKARKAM. The region spanning 70 to 135 is the NAC-A/B domain; it reads SRSEKKARKA…AKIEDLSQQA (66 aa). An RNA/DNA-binding region spans residues 93-108; the sequence is RVTIRKSKNILFVITK. Serine 132 bears the Phosphoserine mark. Lysine 142 bears the N6-acetyllysine; alternate mark. Residue lysine 142 forms a Glycyl lysine isopeptide (Lys-Gly) (interchain with G-Cter in SUMO2); alternate linkage. A Phosphothreonine; by GSK3-beta modification is found at threonine 159. Threonine 161 is subject to Phosphothreonine. Phosphoserine occurs at positions 166, 186, 191, and 203. In terms of domain architecture, UBA spans 176-213; that stretch reads VEVKDIELVMSQANVSRAKAVRALKNNSNDIVNAIMEL.

Belongs to the NAC-alpha family. As to quaternary structure, part of the nascent polypeptide-associated complex (NAC), which is a heterodimer of NACA and BTF3 (via NAC-A/B domains). NAC associates with ribosomes through the BTF3/NACB subunit and contacts the ribosomal protein L23, which is positioned near the exiting site. Both subunits can contact nascent polypeptide chains. NACA may also form homodimers, and only this form binds DNA. Interacts with TBP and JUN. In terms of processing, phosphorylation of Ser-43 by ILK during cell adhesion may promote nuclear localization. Phosphorylation of Thr-159 by GSK3B may promote proteasome mediated degradation. In terms of tissue distribution, isoform 1 appears to be ubiquitously expressed.

Its subcellular location is the cytoplasm. The protein resides in the nucleus. Its function is as follows. Prevents inappropriate targeting of non-secretory polypeptides to the endoplasmic reticulum (ER). Binds to nascent polypeptide chains as they emerge from the ribosome and blocks their interaction with the signal recognition particle (SRP), which normally targets nascent secretory peptides to the ER. Also reduces the inherent affinity of ribosomes for protein translocation sites in the ER membrane (M sites). Isoform 1 and isoform 2 appear to bind DNA and play roles in transcription. Isoform 1 may function as a specific coactivator for JUN, acting to stabilize the interaction of JUN homodimers with promoter elements. The sequence is that of Nascent polypeptide-associated complex subunit alpha (Naca) from Mus musculus (Mouse).